Reading from the N-terminus, the 183-residue chain is NADH-quinone oxidoreductase subunit A (183 aa).

A run of 3 helical transmembrane segments spans residues 11–31, 63–83, and 98–118; these read IIAFVIGVTFLCVFMLTVPLL, FYLVAIFFVVFDLEALYLYAW, and MVIFVVDLLIALIYVFATGAL. The tract at residues 160 to 183 is disordered; sequence GHIPAQSSGRMKSKTSTAPSSKQE. Polar residues predominate over residues 164 to 183; that stretch reads AQSSGRMKSKTSTAPSSKQE.

This sequence belongs to the complex I subunit 3 family. NDH-1 is composed of 14 different subunits. Subunits NuoA, H, J, K, L, M, N constitute the membrane sector of the complex.

The protein resides in the cell inner membrane. It carries out the reaction a quinone + NADH + 5 H(+)(in) = a quinol + NAD(+) + 4 H(+)(out). Its function is as follows. NDH-1 shuttles electrons from NADH, via FMN and iron-sulfur (Fe-S) centers, to quinones in the respiratory chain. The immediate electron acceptor for the enzyme in this species is believed to be ubiquinone. Couples the redox reaction to proton translocation (for every two electrons transferred, four hydrogen ions are translocated across the cytoplasmic membrane), and thus conserves the redox energy in a proton gradient. This chain is NADH-quinone oxidoreductase subunit A, found in Acinetobacter baylyi (strain ATCC 33305 / BD413 / ADP1).